A 428-amino-acid chain; its full sequence is Histidinol dehydrogenase (428 aa).

Substrate contacts are provided by Ser234, Gln256, and His259. 2 residues coordinate Zn(2+): Gln256 and His259. Residues Glu324 and His325 each act as proton acceptor in the active site. The substrate site is built by His325, Asp358, Glu412, and His417. Asp358 lines the Zn(2+) pocket. His417 is a Zn(2+) binding site.

The protein belongs to the histidinol dehydrogenase family. Zn(2+) serves as cofactor.

The enzyme catalyses L-histidinol + 2 NAD(+) + H2O = L-histidine + 2 NADH + 3 H(+). It functions in the pathway amino-acid biosynthesis; L-histidine biosynthesis; L-histidine from 5-phospho-alpha-D-ribose 1-diphosphate: step 9/9. In terms of biological role, catalyzes the sequential NAD-dependent oxidations of L-histidinol to L-histidinaldehyde and then to L-histidine. This Pelagibacter ubique (strain HTCC1062) protein is Histidinol dehydrogenase.